We begin with the raw amino-acid sequence, 172 residues long: NAD(P)H-quinone oxidoreductase subunit J (172 aa).

The protein belongs to the complex I 30 kDa subunit family. NDH-1 can be composed of about 15 different subunits; different subcomplexes with different compositions have been identified which probably have different functions.

The protein localises to the cellular thylakoid membrane. It catalyses the reaction a plastoquinone + NADH + (n+1) H(+)(in) = a plastoquinol + NAD(+) + n H(+)(out). It carries out the reaction a plastoquinone + NADPH + (n+1) H(+)(in) = a plastoquinol + NADP(+) + n H(+)(out). Its function is as follows. NDH-1 shuttles electrons from an unknown electron donor, via FMN and iron-sulfur (Fe-S) centers, to quinones in the respiratory and/or the photosynthetic chain. The immediate electron acceptor for the enzyme in this species is believed to be plastoquinone. Couples the redox reaction to proton translocation, and thus conserves the redox energy in a proton gradient. Cyanobacterial NDH-1 also plays a role in inorganic carbon-concentration. The chain is NAD(P)H-quinone oxidoreductase subunit J from Synechococcus elongatus (strain ATCC 33912 / PCC 7942 / FACHB-805) (Anacystis nidulans R2).